The primary structure comprises 378 residues: Forkhead box protein I1 (378 aa).

Disordered regions lie at residues Met-1–Pro-26 and Asp-208–Leu-278. A DNA-binding region (fork-head) is located at residues Arg-123 to Lys-217. Residues Ser-236 to Pro-248 are compositionally biased toward polar residues.

As to expression, expressed in kidney.

It localises to the nucleus. In terms of biological role, transcriptional activator required for the development of normal hearing, sense of balance and kidney function. Required for the expression of SLC26A4/PDS, JAG1 and COCH in a subset of epithelial cells and the development of the endolymphatic system in the inner ear. Also required for the expression of SLC4A1/AE1, SLC4A9/AE4, ATP6V1B1 and the differentiation of intercalated cells in the epithelium of distal renal tubules. The sequence is that of Forkhead box protein I1 (FOXI1) from Homo sapiens (Human).